A 156-amino-acid chain; its full sequence is ATP synthase subunit b (156 aa).

A helical transmembrane segment spans residues 12 to 32; sequence VAFLIFVLFCMKYVWPPVITA.

This sequence belongs to the ATPase B chain family. As to quaternary structure, F-type ATPases have 2 components, F(1) - the catalytic core - and F(0) - the membrane proton channel. F(1) has five subunits: alpha(3), beta(3), gamma(1), delta(1), epsilon(1). F(0) has three main subunits: a(1), b(2) and c(10-14). The alpha and beta chains form an alternating ring which encloses part of the gamma chain. F(1) is attached to F(0) by a central stalk formed by the gamma and epsilon chains, while a peripheral stalk is formed by the delta and b chains.

The protein localises to the cell inner membrane. Its function is as follows. F(1)F(0) ATP synthase produces ATP from ADP in the presence of a proton or sodium gradient. F-type ATPases consist of two structural domains, F(1) containing the extramembraneous catalytic core and F(0) containing the membrane proton channel, linked together by a central stalk and a peripheral stalk. During catalysis, ATP synthesis in the catalytic domain of F(1) is coupled via a rotary mechanism of the central stalk subunits to proton translocation. Component of the F(0) channel, it forms part of the peripheral stalk, linking F(1) to F(0). The sequence is that of ATP synthase subunit b from Pseudomonas putida (strain ATCC 700007 / DSM 6899 / JCM 31910 / BCRC 17059 / LMG 24140 / F1).